Reading from the N-terminus, the 239-residue chain is Hydroxyacylglutathione hydrolase (239 aa).

Zn(2+)-binding residues include His54, His56, Asp58, His59, His112, Asp131, and His169.

Belongs to the metallo-beta-lactamase superfamily. Glyoxalase II family. As to quaternary structure, monomer. It depends on Zn(2+) as a cofactor.

The enzyme catalyses an S-(2-hydroxyacyl)glutathione + H2O = a 2-hydroxy carboxylate + glutathione + H(+). It participates in secondary metabolite metabolism; methylglyoxal degradation; (R)-lactate from methylglyoxal: step 2/2. Thiolesterase that catalyzes the hydrolysis of S-D-lactoyl-glutathione to form glutathione and D-lactic acid. The polypeptide is Hydroxyacylglutathione hydrolase (Pelagibacter ubique (strain HTCC1062)).